A 310-amino-acid chain; its full sequence is Hairy/enhancer-of-split related with YRPW motif-like protein (310 aa).

The interval 1–21 (MKRPHDYSSPDSDTDELIDVG) is disordered. Residues 12-21 (SDTDELIDVG) show a composition bias toward acidic residues. In terms of domain architecture, bHLH spans 43-98 (ARKKRRGIIEKRRRDRINHSLSELRRLVPSAFEKQGSSKLEKAEILQMTVDHLKLL). In terms of domain architecture, Orange spans 116 to 152 (YRTLGFRECVGEVVRYLSSLEGVESSDPIGARLVSHL). Composition is skewed to low complexity over residues 182 to 192 (LQAASPPASST) and 261 to 273 (PSSSSSSSNSSPP). Disordered regions lie at residues 182–208 (LQAASPPASSTPFPPNARRDLAPHGTA) and 248–310 (HRLQ…IGAF). Positions 293 to 302 (LSSSSKSAQA) are enriched in polar residues.

This sequence belongs to the HEY family.

The protein resides in the nucleus. Transcriptional repressor which functions as a downstream effector of Notch signaling. The protein is Hairy/enhancer-of-split related with YRPW motif-like protein (heyl) of Danio rerio (Zebrafish).